The chain runs to 247 residues: Uracil-DNA glycosylase (247 aa).

Asp83 functions as the Proton acceptor in the catalytic mechanism.

This sequence belongs to the uracil-DNA glycosylase (UDG) superfamily. UNG family.

The protein localises to the cytoplasm. It catalyses the reaction Hydrolyzes single-stranded DNA or mismatched double-stranded DNA and polynucleotides, releasing free uracil.. Functionally, excises uracil residues from the DNA which can arise as a result of misincorporation of dUMP residues by DNA polymerase or due to deamination of cytosine. The protein is Uracil-DNA glycosylase of Deinococcus radiodurans (strain ATCC 13939 / DSM 20539 / JCM 16871 / CCUG 27074 / LMG 4051 / NBRC 15346 / NCIMB 9279 / VKM B-1422 / R1).